Reading from the N-terminus, the 181-residue chain is Adenine phosphoribosyltransferase (181 aa).

This sequence belongs to the purine/pyrimidine phosphoribosyltransferase family. Homodimer.

It is found in the cytoplasm. The enzyme catalyses AMP + diphosphate = 5-phospho-alpha-D-ribose 1-diphosphate + adenine. The protein operates within purine metabolism; AMP biosynthesis via salvage pathway; AMP from adenine: step 1/1. In terms of biological role, catalyzes a salvage reaction resulting in the formation of AMP, that is energically less costly than de novo synthesis. The protein is Adenine phosphoribosyltransferase of Methylorubrum extorquens (strain CM4 / NCIMB 13688) (Methylobacterium extorquens).